We begin with the raw amino-acid sequence, 230 residues long: tRNA (guanine-N(7)-)-methyltransferase (230 aa).

S-adenosyl-L-methionine-binding residues include Glu-61, Glu-86, Asp-113, and Asp-135. Asp-135 is a catalytic residue. Substrate contacts are provided by residues Lys-139, Asp-171, and 209–212 (TRYE).

This sequence belongs to the class I-like SAM-binding methyltransferase superfamily. TrmB family.

The catalysed reaction is guanosine(46) in tRNA + S-adenosyl-L-methionine = N(7)-methylguanosine(46) in tRNA + S-adenosyl-L-homocysteine. Its pathway is tRNA modification; N(7)-methylguanine-tRNA biosynthesis. In terms of biological role, catalyzes the formation of N(7)-methylguanine at position 46 (m7G46) in tRNA. This chain is tRNA (guanine-N(7)-)-methyltransferase, found in Azorhizobium caulinodans (strain ATCC 43989 / DSM 5975 / JCM 20966 / LMG 6465 / NBRC 14845 / NCIMB 13405 / ORS 571).